Here is a 205-residue protein sequence, read N- to C-terminus: MGYPGQAKKLYDTPNHPWQKARIDEETSLVKKYGLRNKKSVWKHASDLRKYRSNARALLGVMSAGNLPEDSHYIRDAQNIVKKLQTLGILKEDAKLEDVLALKVDDIMERRLQTIIYRKGFANSIKQARQFIVHGHISLNGRKITVPGYLVLKSEEDMLSYYVGSPITKEKLMAKPQPASAPKAAAAPKAAAAPAEAAAAPKKEE.

Residues 110 to 172 (RRLQTIIYRK…VGSPITKEKL (63 aa)) enclose the S4 RNA-binding domain. The tract at residues 173 to 205 (MAKPQPASAPKAAAAPKAAAAPAEAAAAPKKEE) is disordered. Residues 174–205 (AKPQPASAPKAAAAPKAAAAPAEAAAAPKKEE) show a composition bias toward low complexity.

It belongs to the universal ribosomal protein uS4 family. As to quaternary structure, part of the 30S ribosomal subunit. Contacts protein S5. The interaction surface between S4 and S5 is involved in control of translational fidelity.

Its function is as follows. One of the primary rRNA binding proteins, it binds directly to 16S rRNA where it nucleates assembly of the body of the 30S subunit. Functionally, with S5 and S12 plays an important role in translational accuracy. This Methanocella arvoryzae (strain DSM 22066 / NBRC 105507 / MRE50) protein is Small ribosomal subunit protein uS4.